A 583-amino-acid chain; its full sequence is Long-chain-fatty-acid--AMP ligase FadD26 (583 aa).

It belongs to the ATP-dependent AMP-binding enzyme family.

The enzyme catalyses holo-[(phenol)carboxyphthiodiolenone synthase] + a long-chain fatty acid + ATP = a long-chain fatty acyl-[(phenol)carboxyphthiodiolenone synthase] + AMP + diphosphate. The catalysed reaction is eicosanoate + holo-[(phenol)carboxyphthiodiolenone synthase] + ATP = icosanoyl-[(phenol)carboxyphthiodiolenone synthase] + AMP + diphosphate. It carries out the reaction holo-[(phenol)carboxyphthiodiolenone synthase] + docosanoate + ATP = docosanoyl-[(phenol)carboxyphthiodiolenone synthase] + AMP + diphosphate. It participates in lipid metabolism; fatty acid biosynthesis. Its function is as follows. Catalyzes the activation of long-chain fatty acids as acyl-adenylates (acyl-AMP), which are then transferred to the multifunctional polyketide synthase PpsA for further chain extension. Catalyzes the adenylation of the long-chain fatty acids eicosanoate (C20) or docosanoate (C22), and potentially the very-long-chain fatty acid lignocerate (C24). Involved in the biosynthesis of phthiocerol dimycocerosate (DIM A) and phthiodiolone dimycocerosate (DIM B). This chain is Long-chain-fatty-acid--AMP ligase FadD26 (fadD26), found in Mycobacterium bovis (strain ATCC BAA-935 / AF2122/97).